Reading from the N-terminus, the 444-residue chain is Tubulin beta-7 chain (444 aa).

GTP contacts are provided by Gln11, Glu69, Ser138, Gly142, Thr143, Gly144, Asn204, and Asn226. Glu69 lines the Mg(2+) pocket.

Belongs to the tubulin family. In terms of assembly, dimer of alpha and beta chains. A typical microtubule is a hollow water-filled tube with an outer diameter of 25 nm and an inner diameter of 15 nM. Alpha-beta heterodimers associate head-to-tail to form protofilaments running lengthwise along the microtubule wall with the beta-tubulin subunit facing the microtubule plus end conferring a structural polarity. Microtubules usually have 13 protofilaments but different protofilament numbers can be found in some organisms and specialized cells. Requires Mg(2+) as cofactor. In terms of tissue distribution, expressed in roots, leaf sheaths, and suspension cultured cells.

The protein localises to the cytoplasm. It is found in the cytoskeleton. Tubulin is the major constituent of microtubules, a cylinder consisting of laterally associated linear protofilaments composed of alpha- and beta-tubulin heterodimers. Microtubules grow by the addition of GTP-tubulin dimers to the microtubule end, where a stabilizing cap forms. Below the cap, tubulin dimers are in GDP-bound state, owing to GTPase activity of alpha-tubulin. In Oryza sativa subsp. japonica (Rice), this protein is Tubulin beta-7 chain (TUBB7).